The primary structure comprises 69 residues: Conotoxin reg3f (69 aa).

An N-terminal signal peptide occupies residues methionine 1–alanine 20. Positions leucine 21–arginine 52 are excised as a propeptide. Disulfide bonds link cysteine 54-cysteine 68, cysteine 55-cysteine 66, and cysteine 60-cysteine 69. Cysteine 69 carries the cysteine amide modification.

In terms of tissue distribution, expressed by the venom duct.

The protein localises to the secreted. This Conus regius (Crown cone) protein is Conotoxin reg3f.